Consider the following 392-residue polypeptide: Proteasomal ATPase-associated factor 1 (392 aa).

Alanine 2 carries the post-translational modification N-acetylalanine. WD repeat units follow at residues 82 to 121 (APYT…IWQA), 125 to 163 (ELRR…IWSA), 167 to 205 (SCVV…LWDC), 209 to 259 (ACLG…LARE), 270 to 308 (SRQL…QLDV), 313 to 349 (APVQ…IVQQ), and 353 to 389 (YVTE…RYQL).

Belongs to the WD repeat PAAF1/RPN14 family. Interacts with PSMC1, PSMC2, PSMC3, PSMC4, PSMC5 and PSMC6. Interacts with SUPT6H. In terms of assembly, (Microbial infection) Interacts with HIV-1 Tat. As to expression, ubiquitously expressed, with highest levels in kidney, brain and testis.

Its function is as follows. Inhibits proteasome 26S assembly and proteolytic activity by impairing the association of the 19S regulatory complex with the 20S core. In case of HIV-1 infection, recruited by viral Tat to the HIV-1 promoter, where it promotes the recruitment of 19S regulatory complex through dissociation of the proteasome 26S. This presumably promotes provirus transcription efficiency. Protects SUPT6H from proteasomal degradation. In Homo sapiens (Human), this protein is Proteasomal ATPase-associated factor 1 (PAAF1).